The sequence spans 405 residues: MTKNSSTVFTHARIATLEEKAANLGLIEEAALVVKDARIVYAGPENKLPDEYASFEKIDCGNRLITPGLIDCHTHLVHAGNRAHEFELRLQGATYEEVARAGGGIVSSVRNLRAASEDDLVRETLPRLDALIAEGVTTVEVKSGYGLDRDSEIKSLKAARRLGEERDVAIRTTFLGAHALPPEMNGDKAAYIDRVINDMLPAIAEQGLADAVDGFCEGIAFLPDEIARVFDAAKAHDIPVKLHADQLSNLHGAALAASYGALSADHLEYTDADGAAAMASAGTVAVLLPGAYYFIRETQKPPVEAFRAAGTKMALATDNNPGTSPLTSLLLTMNMGATLFRMTVEECIAGVTREAARALGILDQTGTLEIGKDADLAIWDIERPAELVYRIGFNPLWKRVFKGQI.

Residues histidine 73 and histidine 75 each coordinate Fe(3+). Zn(2+) is bound by residues histidine 73 and histidine 75. 4-imidazolone-5-propanoate contacts are provided by arginine 82, tyrosine 145, and histidine 178. Tyrosine 145 contributes to the N-formimidoyl-L-glutamate binding site. Histidine 243 lines the Fe(3+) pocket. Histidine 243 provides a ligand contact to Zn(2+). A 4-imidazolone-5-propanoate-binding site is contributed by glutamine 246. Aspartate 318 provides a ligand contact to Fe(3+). Aspartate 318 contacts Zn(2+). N-formimidoyl-L-glutamate contacts are provided by asparagine 320 and glycine 322. Threonine 323 is a 4-imidazolone-5-propanoate binding site.

This sequence belongs to the metallo-dependent hydrolases superfamily. HutI family. It depends on Zn(2+) as a cofactor. Fe(3+) serves as cofactor.

The protein localises to the cytoplasm. It catalyses the reaction 4-imidazolone-5-propanoate + H2O = N-formimidoyl-L-glutamate. It participates in amino-acid degradation; L-histidine degradation into L-glutamate; N-formimidoyl-L-glutamate from L-histidine: step 3/3. Functionally, catalyzes the hydrolytic cleavage of the carbon-nitrogen bond in imidazolone-5-propanoate to yield N-formimidoyl-L-glutamate. It is the third step in the universal histidine degradation pathway. The chain is Imidazolonepropionase from Brucella abortus (strain S19).